Consider the following 338-residue polypeptide: Bifunctional methylenetetrahydrofolate dehydrogenase/cyclohydrolase 2, mitochondrial (338 aa).

Substrate-binding positions include 89–93 (YVRNK) and 136–138 (VQL). NAD(+) contacts are provided by residues 205 to 207 (GRS) and arginine 238. Residue 314–318 (PGGVG) participates in substrate binding.

Belongs to the tetrahydrofolate dehydrogenase/cyclohydrolase family. It depends on Mg(2+) as a cofactor. As to expression, widely expressed.

It localises to the mitochondrion inner membrane. It carries out the reaction (6R)-5,10-methylene-5,6,7,8-tetrahydrofolate + NADP(+) = (6R)-5,10-methenyltetrahydrofolate + NADPH. The enzyme catalyses (6R)-5,10-methylene-5,6,7,8-tetrahydrofolate + NAD(+) = (6R)-5,10-methenyltetrahydrofolate + NADH. The catalysed reaction is (6R)-5,10-methenyltetrahydrofolate + H2O = (6R)-10-formyltetrahydrofolate + H(+). It participates in one-carbon metabolism; tetrahydrofolate interconversion. Functionally, bifunctional mitochondrial folate-interconverting enzyme that has both NAD/NADP-dependent methylenetetrahydrofolate dehydrogenase and methenyltetrahydrofolate cyclohydrolase activities. Its function is as follows. Has no NAD/NADP-dependent methylenetetrahydrofolate dehydrogenase activity. This Rattus norvegicus (Rat) protein is Bifunctional methylenetetrahydrofolate dehydrogenase/cyclohydrolase 2, mitochondrial.